We begin with the raw amino-acid sequence, 134 residues long: Histone H3-like centromeric protein A (134 aa).

The span at 1–14 shows a compositional bias: basic residues; the sequence is MGPRRKPQTPRRRP. The tract at residues 1–34 is disordered; that stretch reads MGPRRKPQTPRRRPSSPAPGPSRQSSSVGSQTLR. The residue at position 2 (G2) is a N,N,N-trimethylglycine. Phosphoserine occurs at positions 16 and 22. Positions 34 to 48 are important for flexibility of DNA ends that protrude from nucleosomes; the sequence is RRRQKFMWLKEIKTL. The interval 35-134 is H3-like; that stretch reads RRQKFMWLKE…RIRGFEGGLP (100 aa). S62 bears the Phosphoserine mark. The tract at residues 69–110 is CATD; sequence CEKFSRGVDFWWQAQALLALQEAAEAFLIHLFEDAYLLSLHA.

It belongs to the histone H3 family. In terms of assembly, component of centromeric nucleosomes, where DNA is wrapped around a histone octamer core. The octamer contains two molecules each of H2A, H2B, CENPA and H4 assembled in one CENPA-H4 heterotetramer and two H2A-H2B heterodimers. CENPA modulates the DNA-binding characteristics of nucleosomes so that protruding DNA ends have higher flexibility than in nucleosomes containing conventional histone H3. Inhibits binding of histone H1 to nucleosomes, since histone H1 binds preferentially to rigid DNA linkers that protrude from nucleosomes. Nucleosomes containing CENPA also contain histone H2A variants such as MACROH2A and H2A.Z/H2AZ1. The CENPA-H4 heterotetramer is more compact and structurally more rigid than corresponding H3-H4 heterotetramers. Can assemble into nucleosomes that contain both CENPA and histone H3.3; these nucleosomes interact with a single CENPC chain. Heterotrimer composed of HJURP, CENPA and histone H4, where HJURP interacts with the dimer formed by CENPA and histone H4 and prevents tetramerization of CENPA and H4. Component of the CENPA-NAC complex, at least composed of CENPA, CENPC, CENPH, CENPM, CENPN, CENPT and CENPU. Interacts (via CATD domain) with HJURP; the interaction is direct and is required for its localization to centromeres. Interacts with CENPC, CENPN and CENPT; interaction is direct. Part of a centromere complex consisting of CENPA, CENPT and CENPW. Identified in centromere complexes containing histones H2A, H2B and H4, and at least CENPA, CENPB, CENPC, CENPT, CENPN, HJURP, SUPT16H, SSRP1 and RSF1. Can self-associate. The CENPA-H4 heterotetramer can bind DNA by itself (in vitro). Interacts with CDK1, PPP1CA and RBBP7. Poly-ADP-ribosylated by PARP1. Post-translationally, trimethylated by NTMT1 at the N-terminal glycine after cleavage of Met-1. Methylation is low before incorporation into nucleosomes and increases with cell cycle progression, with the highest levels in mitotic nucleosomes. In terms of processing, phosphorylated by CDK1 at Ser-62 during early mitosis; this abolishes association with chromatin and centromeres, prevents interaction with HJURP and thereby prevents premature assembly of CENPA into centromeres. Dephosphorylated at Ser-62 by PPP1CA during late mitosis.

Its subcellular location is the nucleus. It is found in the chromosome. The protein resides in the centromere. Functionally, histone H3-like nucleosomal protein that is specifically found in centromeric nucleosomes. Replaces conventional H3 in the nucleosome core of centromeric chromatin that serves as an assembly site for the inner kinetochore. The presence of CENPA subtly modifies the nucleosome structure and the way DNA is wrapped around the nucleosome and gives rise to protruding DNA ends that are less well-ordered and rigid compared to nucleosomes containing histone H3. May serve as an epigenetic mark that propagates centromere identity through replication and cell division. Required for recruitment and assembly of kinetochore proteins, and as a consequence required for progress through mitosis, chromosome segregation and cytokinesis. The chain is Histone H3-like centromeric protein A (Cenpa) from Mus musculus (Mouse).